Reading from the N-terminus, the 349-residue chain is N-acetyltaurine hydrolase (349 aa).

A divalent metal cation is bound by residues His-26, His-28, Glu-169, His-201, His-230, and Asp-298.

This sequence belongs to the metallo-dependent hydrolases superfamily. Phosphotriesterase family. Requires a divalent metal cation as cofactor.

Its subcellular location is the cytoplasm. The protein localises to the cytosol. It carries out the reaction N-acetyltaurine + H2O = taurine + acetate. It catalyses the reaction N-propanoyltaurine + H2O = propanoate + taurine. The enzyme catalyses N-acetyl-L-methionine + H2O = L-methionine + acetate. The catalysed reaction is N-acetyl-L-isoleucine + H2O = L-isoleucine + acetate. It carries out the reaction N-acetyl-L-leucine + H2O = L-leucine + acetate. It catalyses the reaction N-acetyl-L-valine + H2O = L-valine + acetate. Its function is as follows. N-acetyltaurine hydrolase that catalyzes the hydrolysis of N-acetyltaurine into taurine and acetate. PTER also acts on other N-acetyl amino acids (Met, Ile, Leu, Val) and N-propionyltaurine, but at lower rates. This Tetraodon nigroviridis (Spotted green pufferfish) protein is N-acetyltaurine hydrolase (pter).